A 438-amino-acid polypeptide reads, in one-letter code: Transposon Ty2-B Gag polyprotein (438 aa).

Composition is skewed to polar residues over residues 1-11 (MESQQLHQNPH), 19-39 (ASVT…SASN), and 49-60 (KVNSQQETTPGT). 3 disordered regions span residues 1 to 88 (MESQ…YQQH), 364 to 397 (KNVS…AKAH), and 419 to 438 (SSQY…TERI). Residues 295–397 (ENNINVSDRL…SSKPRAAKAH (103 aa)) are RNA-binding. Over residues 369–381 (TSPNTTNTKVTTR) the composition is skewed to low complexity.

Homotrimer.

Its subcellular location is the cytoplasm. Capsid protein (CA) is the structural component of the virus-like particle (VLP), forming the shell that encapsulates the retrotransposons dimeric RNA genome. The particles are assembled from trimer-clustered units and there are holes in the capsid shells that allow for the diffusion of macromolecules. CA also has nucleocapsid-like chaperone activity, promoting primer tRNA(i)-Met annealing to the multipartite primer-binding site (PBS), dimerization of Ty2 RNA and initiation of reverse transcription. This chain is Transposon Ty2-B Gag polyprotein (TY2A-B), found in Saccharomyces cerevisiae (strain ATCC 204508 / S288c) (Baker's yeast).